Here is a 368-residue protein sequence, read N- to C-terminus: Xaa-Pro dipeptidase (368 aa).

Positions 223, 234, 298, 327, and 341 each coordinate Mn(2+).

Belongs to the peptidase M24B family. Requires Mn(2+) as cofactor.

It localises to the cytoplasm. It catalyses the reaction Xaa-L-Pro dipeptide + H2O = an L-alpha-amino acid + L-proline. The polypeptide is Xaa-Pro dipeptidase (pepQ) (Lactobacillus delbrueckii subsp. lactis).